Consider the following 110-residue polypeptide: Insulin growth factor-like family member 1 (110 aa).

The signal sequence occupies residues 1-24 (MAPRGCIVAVFAIFCISRLLCSHG). N-linked (GlcNAc...) asparagine glycosylation occurs at asparagine 71.

The protein belongs to the IGFL family. As to quaternary structure, homodimer; disulfide-linked. Detected in ovary and spinal cord.

It is found in the secreted. Probable ligand of the IGFLR1 cell membrane receptor. The sequence is that of Insulin growth factor-like family member 1 (IGFL1) from Homo sapiens (Human).